The following is a 184-amino-acid chain: MRVMGVDPGLTRCGLSLIESGQGRQLTALDVDVVRTPSDAPLSSRLLAINEAVEHWLETHRPDVVAIERVFSQQNVKTVMGTAQAGGVVALAAAKRGVEVHFHTPSEVKAAVTGNGTADKAQVTAMVTRILALQTKPTPADAADALALAICHCWRAPMIAQMAKAHALAEQQRRSYTAKLKAAR.

Active-site residues include D7, E68, and D141. D7, E68, and D141 together coordinate Mg(2+).

This sequence belongs to the RuvC family. As to quaternary structure, homodimer which binds Holliday junction (HJ) DNA. The HJ becomes 2-fold symmetrical on binding to RuvC with unstacked arms; it has a different conformation from HJ DNA in complex with RuvA. In the full resolvosome a probable DNA-RuvA(4)-RuvB(12)-RuvC(2) complex forms which resolves the HJ. Requires Mg(2+) as cofactor.

It is found in the cytoplasm. It carries out the reaction Endonucleolytic cleavage at a junction such as a reciprocal single-stranded crossover between two homologous DNA duplexes (Holliday junction).. In terms of biological role, the RuvA-RuvB-RuvC complex processes Holliday junction (HJ) DNA during genetic recombination and DNA repair. Endonuclease that resolves HJ intermediates. Cleaves cruciform DNA by making single-stranded nicks across the HJ at symmetrical positions within the homologous arms, yielding a 5'-phosphate and a 3'-hydroxyl group; requires a central core of homology in the junction. The consensus cleavage sequence is 5'-(A/T)TT(C/G)-3'. Cleavage occurs on the 3'-side of the TT dinucleotide at the point of strand exchange. HJ branch migration catalyzed by RuvA-RuvB allows RuvC to scan DNA until it finds its consensus sequence, where it cleaves and resolves the cruciform DNA. This chain is Crossover junction endodeoxyribonuclease RuvC, found in Mycobacterium ulcerans (strain Agy99).